Here is a 155-residue protein sequence, read N- to C-terminus: Transcriptional repressor NrdR (155 aa).

Residues 3–34 (CPYCGHLEDRVVDSRETQDGQATRRRRACLSC) fold into a zinc finger. An ATP-cone domain is found at 49–139 (PQVVKKDGRR…VYRAFRDVGE (91 aa)).

The protein belongs to the NrdR family. Requires Zn(2+) as cofactor.

Functionally, negatively regulates transcription of bacterial ribonucleotide reductase nrd genes and operons by binding to NrdR-boxes. The chain is Transcriptional repressor NrdR from Anaeromyxobacter dehalogenans (strain 2CP-1 / ATCC BAA-258).